We begin with the raw amino-acid sequence, 390 residues long: Putative 8-amino-7-oxononanoate synthase (390 aa).

Substrate is bound at residue R20. A pyridoxal 5'-phosphate-binding site is contributed by 107–108 (GY). A substrate-binding site is contributed by H132. Pyridoxal 5'-phosphate contacts are provided by residues S181, 206–209 (DDAH), and 237–240 (TLGK). At K240 the chain carries N6-(pyridoxal phosphate)lysine. T356 is a binding site for substrate.

The protein belongs to the class-II pyridoxal-phosphate-dependent aminotransferase family. BioF subfamily. As to quaternary structure, homodimer. It depends on pyridoxal 5'-phosphate as a cofactor.

It catalyses the reaction 6-carboxyhexanoyl-[ACP] + L-alanine + H(+) = (8S)-8-amino-7-oxononanoate + holo-[ACP] + CO2. Its pathway is cofactor biosynthesis; biotin biosynthesis. Its function is as follows. Catalyzes the decarboxylative condensation of pimeloyl-[acyl-carrier protein] and L-alanine to produce 8-amino-7-oxononanoate (AON), [acyl-carrier protein], and carbon dioxide. This chain is Putative 8-amino-7-oxononanoate synthase (bioF), found in Syntrophotalea carbinolica (strain DSM 2380 / NBRC 103641 / GraBd1) (Pelobacter carbinolicus).